We begin with the raw amino-acid sequence, 400 residues long: Phosphoglycerate kinase (400 aa).

Residues 22-24 (DFN), Arg38, 61-64 (HLGR), Arg119, and Arg152 contribute to the substrate site. Residues Lys205, Gly296, Glu327, and 353–356 (GGDT) each bind ATP.

It belongs to the phosphoglycerate kinase family. In terms of assembly, monomer.

Its subcellular location is the cytoplasm. It carries out the reaction (2R)-3-phosphoglycerate + ATP = (2R)-3-phospho-glyceroyl phosphate + ADP. It functions in the pathway carbohydrate degradation; glycolysis; pyruvate from D-glyceraldehyde 3-phosphate: step 2/5. This is Phosphoglycerate kinase from Campylobacter jejuni subsp. doylei (strain ATCC BAA-1458 / RM4099 / 269.97).